A 274-amino-acid polypeptide reads, in one-letter code: Large ribosomal subunit protein uL2c (274 aa).

The segment at 224-274 (NPVDHPHGGGEGRAPIGRKKPTTPWGYPALGRKSRKRNKYSEKFILRHRSK) is disordered.

Belongs to the universal ribosomal protein uL2 family. As to quaternary structure, part of the 50S ribosomal subunit.

The protein resides in the plastid. Its subcellular location is the chloroplast. The sequence is that of Large ribosomal subunit protein uL2c (rpl2) from Ipomoea purpurea (Common morning glory).